The sequence spans 110 residues: Large ribosomal subunit protein uL22 (110 aa).

The protein belongs to the universal ribosomal protein uL22 family. As to quaternary structure, part of the 50S ribosomal subunit.

This protein binds specifically to 23S rRNA; its binding is stimulated by other ribosomal proteins, e.g. L4, L17, and L20. It is important during the early stages of 50S assembly. It makes multiple contacts with different domains of the 23S rRNA in the assembled 50S subunit and ribosome. In terms of biological role, the globular domain of the protein is located near the polypeptide exit tunnel on the outside of the subunit, while an extended beta-hairpin is found that lines the wall of the exit tunnel in the center of the 70S ribosome. This Haemophilus ducreyi (strain 35000HP / ATCC 700724) protein is Large ribosomal subunit protein uL22.